The sequence spans 150 residues: MVSVKYVPSDLLINYVSEKLKSEKKIAEPDWSKYVKTGISREKSPVNRDWIYVRAAAMLRKLYINGYLGISRMSSEYGGKVDRGSKRYHAAQGSRSIIRYLFHELEKAGYVQKTPKGRSLSPQGMSLLDNASKDIIKQLAEKDPAFQKFI.

It belongs to the eukaryotic ribosomal protein eS19 family. Part of the 30S ribosomal subunit.

Its function is as follows. May be involved in maturation of the 30S ribosomal subunit. The polypeptide is Small ribosomal subunit protein eS19 (Thermoplasma acidophilum (strain ATCC 25905 / DSM 1728 / JCM 9062 / NBRC 15155 / AMRC-C165)).